Reading from the N-terminus, the 624-residue chain is 1-deoxy-D-xylulose-5-phosphate synthase (624 aa).

Residues H74 and 115 to 117 (GHS) each bind thiamine diphosphate. D146 provides a ligand contact to Mg(2+). Thiamine diphosphate is bound by residues 147–148 (GA), N175, Y286, and E366. Position 175 (N175) interacts with Mg(2+).

It belongs to the transketolase family. DXPS subfamily. Homodimer. It depends on Mg(2+) as a cofactor. Thiamine diphosphate serves as cofactor.

The enzyme catalyses D-glyceraldehyde 3-phosphate + pyruvate + H(+) = 1-deoxy-D-xylulose 5-phosphate + CO2. Its pathway is metabolic intermediate biosynthesis; 1-deoxy-D-xylulose 5-phosphate biosynthesis; 1-deoxy-D-xylulose 5-phosphate from D-glyceraldehyde 3-phosphate and pyruvate: step 1/1. In terms of biological role, catalyzes the acyloin condensation reaction between C atoms 2 and 3 of pyruvate and glyceraldehyde 3-phosphate to yield 1-deoxy-D-xylulose-5-phosphate (DXP). The chain is 1-deoxy-D-xylulose-5-phosphate synthase from Clostridium kluyveri (strain NBRC 12016).